Reading from the N-terminus, the 384-residue chain is Glutamate 5-kinase (384 aa).

An ATP-binding site is contributed by K24. Positions 64, 149, and 161 each coordinate substrate. ATP is bound by residues 181–182 (TD) and 223–229 (TGGMRTK). The 83-residue stretch at 288 to 370 (PGAILIDAGA…RDIQPLLGYT (83 aa)) folds into the PUA domain.

This sequence belongs to the glutamate 5-kinase family.

It localises to the cytoplasm. It catalyses the reaction L-glutamate + ATP = L-glutamyl 5-phosphate + ADP. Its pathway is amino-acid biosynthesis; L-proline biosynthesis; L-glutamate 5-semialdehyde from L-glutamate: step 1/2. In terms of biological role, catalyzes the transfer of a phosphate group to glutamate to form L-glutamate 5-phosphate. The protein is Glutamate 5-kinase of Xylella fastidiosa (strain 9a5c).